Consider the following 502-residue polypeptide: Actin-binding protein WASF3 (502 aa).

Residues 57–93 (NEANNFYIRANSLQDRIDRLAVKVTQLDSTVEEVSLQ) are a coiled coil. Tyrosine 151 is subject to Phosphotyrosine; by ABL1. A coiled-coil region spans residues 162 to 206 (KEKMLQDTEDKRKEKRRQKEQKRIDGTTREVKKVRKARNRRQEWN). Disordered regions lie at residues 169 to 210 (TEDK…MMAY) and 223 to 443 (SVYH…ARSD). Residues 182–192 (QKRIDGTTREV) are compositionally biased toward basic and acidic residues. Positions 223 to 237 (SVYHGASSEGSLSPD) are enriched in polar residues. The residue at position 248 (tyrosine 248) is a Phosphotyrosine; by ABL1. Positions 302-312 (QQPPPPPPPQA) are enriched in pro residues. At tyrosine 337 the chain carries Phosphotyrosine; by ABL1. Composition is skewed to pro residues over residues 341 to 352 (SGPPPPPPPPVI) and 394 to 410 (APPP…PPGP). Positions 411–423 (GSSLSSSPMHGPP) are enriched in low complexity. A WH2 domain is found at 440-457 (ARSDLLAAIRMGIQLKKV). Residue tyrosine 486 is modified to Phosphotyrosine; by ABL1.

It belongs to the SCAR/WAVE family. Binds actin and the Arp2/3 complex. In terms of processing, phosphorylation by ABL1 promotes lamellipodia formation and cell migration. In terms of tissue distribution, expressed in ovary and brain.

It is found in the cytoplasm. The protein localises to the cytoskeleton. Its function is as follows. Downstream effector molecules involved in the transmission of signals from tyrosine kinase receptors and small GTPases to the actin cytoskeleton. Plays a role in the regulation of cell morphology and cytoskeletal organization. Required in the control of cell shape. This Homo sapiens (Human) protein is Actin-binding protein WASF3 (WASF3).